The chain runs to 597 residues: Ribosomal oxygenase 1 (597 aa).

Met1 is modified (N-acetylmethionine). Positions 1–138 are disordered; it reads MDELPNGNGA…HVDDPERPWD (138 aa). 2 stretches are compositionally biased toward basic residues: residues 14-24 and 37-48; these read KRGRGRRRRQP and RPRKVRRHRKSA. The span at 49–62 shows a compositional bias: low complexity; that stretch reads ASRVAALRARALLS. Ser62 and Ser65 each carry phosphoserine. The span at 72–81 shows a compositional bias: basic and acidic residues; that stretch reads VRGKRERPAE. Ser86 carries the phosphoserine modification. The region spanning 250–395 is the JmjC domain; sequence CSLRLLCPQA…DFLEAVLPLA (146 aa). The Fe cation site is built by His296, Asp298, and His361.

It belongs to the ROX family. NO66 subfamily. Interacts with SP7/OSX; the interaction is direct. Interacts with MYC. Interacts with PHF19; leading to its recruitment to H3K36me3 sites. The cofactor is Fe(2+).

The protein localises to the nucleus. The protein resides in the nucleolus. Its subcellular location is the nucleoplasm. The catalysed reaction is N(6),N(6)-dimethyl-L-lysyl(36)-[histone H3] + 2 2-oxoglutarate + 2 O2 = L-lysyl(36)-[histone H3] + 2 formaldehyde + 2 succinate + 2 CO2. It catalyses the reaction N(6)-methyl-L-lysyl-[protein] + 2-oxoglutarate + O2 = L-lysyl-[protein] + formaldehyde + succinate + CO2. The enzyme catalyses L-histidyl-[protein] + 2-oxoglutarate + O2 = (3S)-3-hydroxy-L-histidyl-[protein] + succinate + CO2. Oxygenase that can act as both a histone lysine demethylase and a ribosomal histidine hydroxylase. Specifically demethylates 'Lys-4' (H3K4me) and 'Lys-36' (H3K36me) of histone H3, thereby playing a central role in histone code. Preferentially demethylates trimethylated H3 'Lys-4' (H3K4me3) and monomethylated H3 'Lys-4' (H3K4me1) residues, while it has weaker activity for dimethylated H3 'Lys-36' (H3K36me2). Acts as a regulator of osteoblast differentiation via its interaction with SP7/OSX by demethylating H3K4me and H3K36me, thereby inhibiting SP7/OSX-mediated promoter activation. Also catalyzes demethylation of non-histone proteins, such as CGAS: demethylation of monomethylated CGAS promotes interaction between CGAS and PARP1, followed by PARP1 inactivation. Also catalyzes the hydroxylation of 60S ribosomal protein L8 on 'His-216', thereby playing a role in ribosome biogenesis. Participates in MYC-induced transcriptional activation. The protein is Ribosomal oxygenase 1 of Rattus norvegicus (Rat).